A 648-amino-acid polypeptide reads, in one-letter code: Biosynthetic arginine decarboxylase (648 aa).

Lys109 carries the post-translational modification N6-(pyridoxal phosphate)lysine. Residue 291 to 301 participates in substrate binding; the sequence is IDVGGGLGIDF.

Belongs to the Orn/Lys/Arg decarboxylase class-II family. SpeA subfamily. The cofactor is Mg(2+). Pyridoxal 5'-phosphate is required as a cofactor.

It catalyses the reaction L-arginine + H(+) = agmatine + CO2. The protein operates within amine and polyamine biosynthesis; agmatine biosynthesis; agmatine from L-arginine: step 1/1. Its function is as follows. Catalyzes the biosynthesis of agmatine from arginine. The chain is Biosynthetic arginine decarboxylase from Prochlorococcus marinus (strain AS9601).